A 699-amino-acid polypeptide reads, in one-letter code: Elongation factor G 1 (699 aa).

A tr-type G domain is found at 8–290 (ERYRNIGICA…AVIEYLPSPT (283 aa)). Residues 17-24 (AHVDAGKT), 88-92 (DTPGH), and 142-145 (NKMD) contribute to the GTP site.

The protein belongs to the TRAFAC class translation factor GTPase superfamily. Classic translation factor GTPase family. EF-G/EF-2 subfamily.

Its subcellular location is the cytoplasm. Catalyzes the GTP-dependent ribosomal translocation step during translation elongation. During this step, the ribosome changes from the pre-translocational (PRE) to the post-translocational (POST) state as the newly formed A-site-bound peptidyl-tRNA and P-site-bound deacylated tRNA move to the P and E sites, respectively. Catalyzes the coordinated movement of the two tRNA molecules, the mRNA and conformational changes in the ribosome. The protein is Elongation factor G 1 of Hahella chejuensis (strain KCTC 2396).